A 312-amino-acid chain; its full sequence is Ribonuclease HIII (312 aa).

The region spanning 95–311 is the RNase H type-2 domain; it reads FNCIGSDEAG…REKAQKILKP (217 aa). A divalent metal cation contacts are provided by D101, E102, and D206.

This sequence belongs to the RNase HII family. RnhC subfamily. It depends on Mn(2+) as a cofactor. The cofactor is Mg(2+).

The protein localises to the cytoplasm. It carries out the reaction Endonucleolytic cleavage to 5'-phosphomonoester.. Endonuclease that specifically degrades the RNA of RNA-DNA hybrids. This is Ribonuclease HIII from Staphylococcus aureus (strain USA300).